The following is a 456-amino-acid chain: Chromosomal replication initiator protein DnaA (456 aa).

The domain I, interacts with DnaA modulators stretch occupies residues 1-83 (MTASLWQQCL…LRFDIGNRPH (83 aa)). Residues 83–119 (HPVAVARAPARGADPVNNSQKSWESKAEAKPEPNHKS) form a domain II region. The tract at residues 92-122 (ARGADPVNNSQKSWESKAEAKPEPNHKSNTN) is disordered. Positions 105-117 (WESKAEAKPEPNH) are enriched in basic and acidic residues. Positions 120-336 (NTNVNYTFEN…GALNRVIANA (217 aa)) are domain III, AAA+ region. Gly-164, Gly-166, Lys-167, and Thr-168 together coordinate ATP. The domain IV, binds dsDNA stretch occupies residues 337 to 456 (NFTGRAINID…YSNLIRTLSS (120 aa)).

Belongs to the DnaA family. As to quaternary structure, oligomerizes as a right-handed, spiral filament on DNA at oriC.

It localises to the cytoplasm. Plays an essential role in the initiation and regulation of chromosomal replication. ATP-DnaA binds to the origin of replication (oriC) to initiate formation of the DNA replication initiation complex once per cell cycle. Binds the DnaA box (a 9 base pair repeat at the origin) and separates the double-stranded (ds)DNA. Forms a right-handed helical filament on oriC DNA; dsDNA binds to the exterior of the filament while single-stranded (ss)DNA is stabiized in the filament's interior. The ATP-DnaA-oriC complex binds and stabilizes one strand of the AT-rich DNA unwinding element (DUE), permitting loading of DNA polymerase. After initiation quickly degrades to an ADP-DnaA complex that is not apt for DNA replication. Binds acidic phospholipids. This Aeromonas hydrophila subsp. hydrophila (strain ATCC 7966 / DSM 30187 / BCRC 13018 / CCUG 14551 / JCM 1027 / KCTC 2358 / NCIMB 9240 / NCTC 8049) protein is Chromosomal replication initiator protein DnaA.